The chain runs to 534 residues: Pentatricopeptide repeat-containing protein At1g07590, mitochondrial (534 aa).

Residues Met-1–Arg-20 constitute a mitochondrion transit peptide. 9 PPR repeats span residues Asn-165–Thr-199, Ser-200–Pro-234, His-235–Pro-269, Asn-270–Ser-300, Asn-305–Phe-335, Arg-339–Val-369, Glu-374–Pro-408, Asn-409–Lys-443, and Trp-451–Arg-485.

The protein belongs to the PPR family. P subfamily.

It is found in the mitochondrion. This is Pentatricopeptide repeat-containing protein At1g07590, mitochondrial from Arabidopsis thaliana (Mouse-ear cress).